We begin with the raw amino-acid sequence, 195 residues long: Putative L(+)-tartrate dehydratase subunit beta (195 aa).

His-36 is a catalytic residue. Lys-104 contacts substrate.

Belongs to the class-I fumarase family. In terms of assembly, heterotetramer of two alpha and two beta subunits.

The catalysed reaction is (2R,3R)-tartrate = oxaloacetate + H2O. The sequence is that of Putative L(+)-tartrate dehydratase subunit beta from Methanocaldococcus jannaschii (strain ATCC 43067 / DSM 2661 / JAL-1 / JCM 10045 / NBRC 100440) (Methanococcus jannaschii).